A 427-amino-acid polypeptide reads, in one-letter code: Histidine--tRNA ligase (427 aa).

The protein belongs to the class-II aminoacyl-tRNA synthetase family. As to quaternary structure, homodimer.

The protein resides in the cytoplasm. It catalyses the reaction tRNA(His) + L-histidine + ATP = L-histidyl-tRNA(His) + AMP + diphosphate + H(+). In Mannheimia succiniciproducens (strain KCTC 0769BP / MBEL55E), this protein is Histidine--tRNA ligase.